A 141-amino-acid polypeptide reads, in one-letter code: Large ribosomal subunit protein uL16 (141 aa).

The segment at 1–23 (MLMPKRTKYRKQMKGRNRGKAHR) is disordered.

This sequence belongs to the universal ribosomal protein uL16 family. In terms of assembly, part of the 50S ribosomal subunit.

In terms of biological role, binds 23S rRNA and is also seen to make contacts with the A and possibly P site tRNAs. The protein is Large ribosomal subunit protein uL16 of Helicobacter pylori (strain J99 / ATCC 700824) (Campylobacter pylori J99).